The following is a 188-amino-acid chain: MNIIRKLKPGTISLVLGPMFAGKTTFLIHCIYMLERLEKKVVFIKSTKNTRDKTIKTHSGIQLQSKQCEIIESTQLSDVGSLTDIHAVVIDEAHFFDDLIKCRAWADEEKIIILAGLNASFEQKMFQPIVHIFPYCSWIKYIGRTCMKCNRHNACFNVRKNADKTLILAGGSELYVTCCNNCLKKQMY.

17–24 (GPMFAGKT) provides a ligand contact to ATP. The Proton acceptor role is filled by E92. F121 lines the substrate pocket. The Zn(2+) site is built by C146 and C149. 166–170 (LILAG) contacts substrate. Zn(2+) is bound by residues C179 and C182.

It belongs to the thymidine kinase family.

The enzyme catalyses thymidine + ATP = dTMP + ADP + H(+). In terms of biological role, phosphorylates thymidine. ASFV replicates in the cytoplasm of infected cells and contains genes encoding a number of enzymes needed for DNA synthesis, including thymidine kinase. Important for growth in swine macrophages in vitro and is a virus virulence factor in swine. The protein is Thymidine kinase of Ornithodoros (relapsing fever ticks).